A 73-amino-acid polypeptide reads, in one-letter code: MAKKEDTIVLEGRVEELLPGMHFRVMLENGVPITAHLCGKMRMSNIRLLVGDRVTVEMSTYDLTKARVVYRHR.

The S1-like domain maps to 1-73 (MAKKEDTIVL…TKARVVYRHR (73 aa)).

The protein belongs to the IF-1 family. Component of the 30S ribosomal translation pre-initiation complex which assembles on the 30S ribosome in the order IF-2 and IF-3, IF-1 and N-formylmethionyl-tRNA(fMet); mRNA recruitment can occur at any time during PIC assembly.

It is found in the cytoplasm. Its function is as follows. One of the essential components for the initiation of protein synthesis. Stabilizes the binding of IF-2 and IF-3 on the 30S subunit to which N-formylmethionyl-tRNA(fMet) subsequently binds. Helps modulate mRNA selection, yielding the 30S pre-initiation complex (PIC). Upon addition of the 50S ribosomal subunit IF-1, IF-2 and IF-3 are released leaving the mature 70S translation initiation complex. This Chlamydia muridarum (strain MoPn / Nigg) protein is Translation initiation factor IF-1.